The sequence spans 313 residues: tRNA dimethylallyltransferase (313 aa).

12–19 provides a ligand contact to ATP; that stretch reads GPTASGKS. 14–19 contacts substrate; the sequence is TASGKS. Interaction with substrate tRNA stretches follow at residues 37 to 40 and 161 to 165; these read DSMQ and QRSIR.

The protein belongs to the IPP transferase family. Monomer. The cofactor is Mg(2+).

It carries out the reaction adenosine(37) in tRNA + dimethylallyl diphosphate = N(6)-dimethylallyladenosine(37) in tRNA + diphosphate. In terms of biological role, catalyzes the transfer of a dimethylallyl group onto the adenine at position 37 in tRNAs that read codons beginning with uridine, leading to the formation of N6-(dimethylallyl)adenosine (i(6)A). This is tRNA dimethylallyltransferase from Pelagibacter ubique (strain HTCC1062).